The sequence spans 436 residues: Chromosomal replication initiator protein DnaA (436 aa).

A domain I, interacts with DnaA modulators region spans residues 1 to 69; sequence MSIFTKIKKS…SELYEKETGI (69 aa). The tract at residues 69 to 97 is domain II; sequence IKPKIDIVTKEISHRPLTIEEIIEPTTPS. Residues 98–311 are domain III, AAA+ region; sequence VLIPEYTFES…GMITKINAMS (214 aa). ATP is bound by residues Gly-142, Gly-144, Lys-145, and Thr-146. A domain IV, binds dsDNA region spans residues 312–436; that stretch reads KILGISEITL…KNKIQIKKSE (125 aa).

This sequence belongs to the DnaA family. As to quaternary structure, oligomerizes as a right-handed, spiral filament on DNA at oriC.

Its subcellular location is the cytoplasm. In terms of biological role, plays an essential role in the initiation and regulation of chromosomal replication. ATP-DnaA binds to the origin of replication (oriC) to initiate formation of the DNA replication initiation complex once per cell cycle. Binds the DnaA box (a 9 base pair repeat at the origin) and separates the double-stranded (ds)DNA. Forms a right-handed helical filament on oriC DNA; dsDNA binds to the exterior of the filament while single-stranded (ss)DNA is stabiized in the filament's interior. The ATP-DnaA-oriC complex binds and stabilizes one strand of the AT-rich DNA unwinding element (DUE), permitting loading of DNA polymerase. After initiation quickly degrades to an ADP-DnaA complex that is not apt for DNA replication. Binds acidic phospholipids. The sequence is that of Chromosomal replication initiator protein DnaA from Nautilia profundicola (strain ATCC BAA-1463 / DSM 18972 / AmH).